The chain runs to 178 residues: Caveolin-1 (178 aa).

The residue at position 2 (S2) is an N-acetylserine. S2 is modified (phosphoserine). The required for homooligomerization stretch occupies residues 2 to 94 (SGGKYVDSEG…WKASFTTFTV (93 aa)). At 2–104 (SGGKYVDSEG…TKYWFYRLLS (103 aa)) the chain is on the cytoplasmic side. The residue at position 5 (K5) is an N6-acetyllysine; alternate. Residue K5 forms a Glycyl lysine isopeptide (Lys-Gly) (interchain with G-Cter in ubiquitin); alternate linkage. Y6 is subject to Phosphotyrosine. Residue S9 is modified to Phosphoserine. Y14 carries the post-translational modification Phosphotyrosine; by ABL1. Y25 bears the Phosphotyrosine mark. Glycyl lysine isopeptide (Lys-Gly) (interchain with G-Cter in ubiquitin) cross-links involve residues K26, K30, K39, K47, and K57. The segment at 82–94 (DGIWKASFTTFTV) is interaction with CAVIN3. An intramembrane region (helical) is located at residues 105 to 125 (ALFGIPMALIWGIYFAILSFL). At 126–178 (HIWAVVPCIKSFLIEIQCISRVYSIYVHTFCDPLFEAIGKIFSNIRINMQKEI) the chain is on the cytoplasmic side. The interacts with SPRY1, SPRY2, SPRY3 and SPRY4 stretch occupies residues 131–142 (VPCIKSFLIEIQ). Residues C133, C143, and C156 are each lipidated (S-palmitoyl cysteine). The interval 149–160 (SIYVHTFCDPLF) is interacts with SPRY1, SPRY2, and SPRY4. Positions 167–178 (FSNIRINMQKEI) are interacts with SPRY1, SPRY2, SPRY3 and SPRY4.

Belongs to the caveolin family. As to quaternary structure, homooligomer. Interacts with GLIPR2. Interacts with NOSTRIN. Interacts with SNAP25 and STX1A. Interacts (via the N-terminus) with DPP4; the interaction is direct. Interacts with CTNNB1, CDH1 and JUP. Interacts with PACSIN2; this interaction induces membrane tubulation. Interacts with SLC7A9. Interacts with BMX and BTK. Interacts with TGFBR1. Interacts with CAVIN3 (via leucine-zipper domain) in a cholesterol-sensitive manner. Interacts with CAVIN1. Interacts with EHD2 in a cholesterol-dependent manner. Forms a ternary complex with UBXN6 and VCP; mediates CAV1 targeting to lysosomes for degradation. Interacts with ABCG1; this interaction regulates ABCG1-mediated cholesterol efflux. Interacts with NEU3; this interaction enhances NEU3 sialidase activity within caveola. Interacts (via C-terminus) with SPRY1, SPRY2 (via C-terminus), SPRY3, and SPRY4. Interacts with IGFBP5; this interaction allows trafficking of IGFBP5 from the plasma membrane to the nucleus. Post-translationally, phosphorylated at Tyr-14 by ABL1 in response to oxidative stress. Ubiquitinated. Undergo monoubiquitination and multi- and/or polyubiquitination. Monoubiquitination of N-terminal lysines promotes integration in a ternary complex with UBXN6 and VCP which promotes oligomeric CAV1 targeting to lysosomes for degradation. Ubiquitinated by ZNRF1; leading to degradation and modulation of the TLR4-mediated immune response.

The protein resides in the golgi apparatus membrane. Its subcellular location is the cell membrane. It is found in the membrane. It localises to the caveola. The protein localises to the membrane raft. Its function is as follows. May act as a scaffolding protein within caveolar membranes. Forms a stable heterooligomeric complex with CAV2 that targets to lipid rafts and drives caveolae formation. Mediates the recruitment of CAVIN proteins (CAVIN1/2/3/4) to the caveolae. Interacts directly with G-protein alpha subunits and can functionally regulate their activity. Involved in the costimulatory signal essential for T-cell receptor (TCR)-mediated T-cell activation. Its binding to DPP4 induces T-cell proliferation and NF-kappa-B activation in a T-cell receptor/CD3-dependent manner. Recruits CTNNB1 to caveolar membranes and may regulate CTNNB1-mediated signaling through the Wnt pathway. Negatively regulates TGFB1-mediated activation of SMAD2/3 by mediating the internalization of TGFBR1 from membrane rafts leading to its subsequent degradation. Binds 20(S)-hydroxycholesterol (20(S)-OHC). In Muntiacus muntjak (Barking deer), this protein is Caveolin-1 (CAV1).